The sequence spans 520 residues: MGSKLPELPKLSPEKHRWEKSNVDPRVLQRRGIGSEAIVGMERSNRRGQYDLYLLATLRTAHVSTSTPLSLLYLKEKLELALLVMRFEHPECACTVTWDDQVPPIIQYASPQNDEEALMWAKSSVHIRTTSQTGFDVRYEIEGKRQDLDQDNMEPSRPIVIYLISNVTNGDAQLTSGATVDVLLHMNHLFWDGISARMFTGDLFRELNKLINSNEQELPKLQWGTEASNLSAPVLDALKINIEELREEFEAASNQFVKALYENYGGWGLEFKSGLGLPRTDIHTSTATESKAIINGVKTRLGPQYTISHLAQAAVVIAMLEIIQPPNLTDKDIFVSPMPVNGRRWLKDGLADHHYSICETGAVIRIENIKSLVLNNNNDKGYRPRCDEKKPGEDVKKSFDQWLGNPYQLALGLAVHTLEASFLTANPMPFDKVAAPFFISDGRNEQFIPASITTTTGEILMTIDNFVFFLNQCLPYLAIRLESWKDASTLSVCYNKANYSQEEATKFLKCVAKYMLIFSQ.

The tract at residues 1 to 23 (MGSKLPELPKLSPEKHRWEKSNV) is disordered. The segment covering 12-23 (SPEKHRWEKSNV) has biased composition (basic and acidic residues).

The protein belongs to the trichothecene O-acetyltransferase family.

It participates in sesquiterpene biosynthesis; trichothecene biosynthesis. Its function is as follows. Trichothecene O-acetyltransferase; part of the gene cluster that mediates the production of the antimicrobial trichothecene harzianum A (HA) that plays a role in Botrytis cinerea antagonistic activity and plant defense priming. The biosynthesis of harzianum A begins with the cyclization of farnesyl diphosphate to trichodiene and is catalyzed by the trichodiene synthase TRI5. Trichodiene undergoes a series of oxygenations catalyzed by the cytochrome P450 monooxygenase TRI4. TRI4 controls the addition of 3 oxygens at C-2, C-11, and the C-12, C-13-epoxide to form the intermediate isotrichodiol. Isotrichodiol then undergoes a non-enzymatic isomerization and cyclization to form 12,13-epoxytrichothec-9-ene (EPT) which is further converted to trichodermol by the cytochrome P450 monooxygenase TRI11 via C-4 hydroxylation. The last step of HA synthesis is esterification of an octatriendioyl moiety to the C-4 oxygen of trichodermol. The octatriendioyl moiety is probably produced by the polyketide synthase TRI17 and the esterification performed by the trichothecene O-acetyltransferase TRI3. The sequence is that of Trichothecene O-acetyltransferase TRI3 from Trichoderma arundinaceum.